The chain runs to 336 residues: GTPase Obg (336 aa).

Positions 1–159 (MKFLDQAKIY…RWVWLRLKLI (159 aa)) constitute an Obg domain. The 169-residue stretch at 160–328 (ADIGLVGLPN…LLRLLQDRVT (169 aa)) folds into the OBG-type G domain. Residues 166–173 (GLPNAGKS), 191–195 (FTTLH), 213–216 (DIPG), 280–283 (NKCD), and 309–311 (SGA) contribute to the GTP site. Residues serine 173 and threonine 193 each contribute to the Mg(2+) site.

It belongs to the TRAFAC class OBG-HflX-like GTPase superfamily. OBG GTPase family. In terms of assembly, monomer. Mg(2+) serves as cofactor.

Its subcellular location is the cytoplasm. In terms of biological role, an essential GTPase which binds GTP, GDP and possibly (p)ppGpp with moderate affinity, with high nucleotide exchange rates and a fairly low GTP hydrolysis rate. Plays a role in control of the cell cycle, stress response, ribosome biogenesis and in those bacteria that undergo differentiation, in morphogenesis control. The polypeptide is GTPase Obg (Gluconobacter oxydans (strain 621H) (Gluconobacter suboxydans)).